Consider the following 236-residue polypeptide: Protein YIPF6 (236 aa).

Ala2 carries the post-translational modification N-acetylalanine. Residues 2 to 84 (AEAEDSPGEQ…HVLYPRKSNA (83 aa)) lie on the Cytoplasmic side of the membrane. The residue at position 7 (Ser7) is a Phosphoserine. A helical transmembrane segment spans residues 85–105 (LLRDWDLWGPLILCVTLALML). Residues 106-116 (QKSSIDGKNDG) lie on the Lumenal side of the membrane. Residues 117 to 137 (GGPEFAEVFVIIWFGAVTITL) form a helical membrane-spanning segment. Residues 138–147 (NSKLLGGNIS) are Cytoplasmic-facing. Residues 148–168 (FFQSLCVLGYCILPLNIAMLI) traverse the membrane as a helical segment. At 169 to 185 (CRLLLLAGQGPINFMIR) the chain is on the lumenal side. A helical transmembrane segment spans residues 186 to 206 (LFVVLLMFAWSVVASTAFLAD). At 207-213 (SQPPNRK) the chain is on the cytoplasmic side. The helical transmembrane segment at 214–234 (ALAVYPVFLFYFVISWMILTF) threads the bilayer. Residues 235–236 (TP) are Lumenal-facing.

Belongs to the YIP1 family. As to quaternary structure, predominantly interacts with YIPF1 or YIPF2, but may also form a ternary complex with YIPF1 and YIPF2. This interaction may stabilize YIPF1 and YIPF2.

Its subcellular location is the golgi apparatus membrane. Its function is as follows. May be required for stable YIPF1 and YIPF2 protein expression. The protein is Protein YIPF6 (Yipf6) of Mus musculus (Mouse).